Here is a 351-residue protein sequence, read N- to C-terminus: Divinyl chlorophyll a/b light-harvesting protein PcbA (351 aa).

The next 6 helical transmembrane spans lie at 27–47 (FIAA…AFTL), 64–84 (LIAL…GTFV), 89–109 (VTAI…GGLL), 202–222 (VMGG…FHIA), 242–262 (AILS…AFWC), and 305–325 (LTNV…WHAL).

It belongs to the PsbB/PsbC family. IsiA/Pcb subfamily. In terms of assembly, the antenna complex consists of divinyl chlorophylls (a and b) and divinyl chlorophyll a/b binding proteins and binds more divinyl chlorophyll b than does the antenna complex from high-light-adapted Prochlorococcus. Divinyl chlorophyll a is required as a cofactor. It depends on divinyl chlorophyll b as a cofactor.

The protein localises to the cellular thylakoid membrane. The antenna complex functions as a light receptor, it captures and delivers excitation energy to photosystems II and I. The Prochlorales pcb genes are not related to higher plant LHCs. This is Divinyl chlorophyll a/b light-harvesting protein PcbA (pcbA) from Prochlorococcus marinus (strain SARG / CCMP1375 / SS120).